A 516-amino-acid chain; its full sequence is MALSQATPFSATELLLASATFCLVFWVVKAWQPRVPKGLKSPPGPWSWPLIGHVLTLGKSPHLALSRLSQRYGDVLQIRIGCTPVLVLSGLDTIRQALVRQGDDFKGRPDLYSFTLVADGQSMTFNPDSGPVWAAQRRLAQNALNSFSVASDPASSSSCYLEMHVSKEAEALIGKFQELMAGSGRFDPYDHVVVSVAKVIGAMCFGQHFPQSSGEMVSLVRNTHDFVETASSGSPVDFFPILKYLPNPALQKYKSFNRRFLQFLWKMVQEHHQDFDKNRVQDIVGALFKHYEDNSRASGGLMPQKKTVNLVNDIFAAGFDPITTAISWSLLYLVTNPEIQRKIQQELDTVIGRARRPRLSDRSQLPYLEAFILETFRHSSFVPFTIPHSTIRDTTLNGFYIPKELCVFINQWQVNHDPKLWGDPSEFRPERFLTSHDTTISKTLSEKVMLFGMGKRRCIGEVLAKWEIFLFLAILLQQLEFSVPPGVKVDLTPTYGLTMKPAPCEHVQARLRFPIK.

Ser-69 is a glycosylation site (O-linked (GlcNAc) serine). Phe-226 contributes to the substrate binding site. Cys-458 contacts heme.

Belongs to the cytochrome P450 family. In terms of assembly, interacts with PGRMC1; the interaction requires PGRMC1 homodimerization. Heme is required as a cofactor.

It is found in the endoplasmic reticulum membrane. The protein localises to the microsome membrane. It carries out the reaction an organic molecule + reduced [NADPH--hemoprotein reductase] + O2 = an alcohol + oxidized [NADPH--hemoprotein reductase] + H2O + H(+). The enzyme catalyses 17beta-estradiol + reduced [NADPH--hemoprotein reductase] + O2 = 2-hydroxy-17beta-estradiol + oxidized [NADPH--hemoprotein reductase] + H2O + H(+). It catalyses the reaction 17beta-estradiol + reduced [NADPH--hemoprotein reductase] + O2 = 4-hydroxy-17beta-estradiol + oxidized [NADPH--hemoprotein reductase] + H2O + H(+). The catalysed reaction is estrone + reduced [NADPH--hemoprotein reductase] + O2 = 2-hydroxyestrone + oxidized [NADPH--hemoprotein reductase] + H2O + H(+). It carries out the reaction estrone + reduced [NADPH--hemoprotein reductase] + O2 = 4-hydroxyestrone + oxidized [NADPH--hemoprotein reductase] + H2O + H(+). The enzyme catalyses cholesterol + reduced [NADPH--hemoprotein reductase] + O2 = 25-hydroxycholesterol + oxidized [NADPH--hemoprotein reductase] + H2O + H(+). It catalyses the reaction all-trans-retinol + reduced [NADPH--hemoprotein reductase] + O2 = all-trans-retinal + oxidized [NADPH--hemoprotein reductase] + 2 H2O + H(+). The catalysed reaction is all-trans-retinal + reduced [NADPH--hemoprotein reductase] + O2 = all-trans-retinoate + oxidized [NADPH--hemoprotein reductase] + H2O + 2 H(+). It carries out the reaction (5Z,8Z,11Z,14Z)-eicosatetraenoate + reduced [NADPH--hemoprotein reductase] + O2 = (14R,15S)-epoxy-(5Z,8Z,11Z)-eicosatrienoate + oxidized [NADPH--hemoprotein reductase] + H2O + H(+). The enzyme catalyses (5Z,8Z,11Z,14Z)-eicosatetraenoate + reduced [NADPH--hemoprotein reductase] + O2 = (14S,15R)-epoxy-(5Z,8Z,11Z)-eicosatrienoate + oxidized [NADPH--hemoprotein reductase] + H2O + H(+). It catalyses the reaction (5Z,8Z,11Z,14Z,17Z)-eicosapentaenoate + reduced [NADPH--hemoprotein reductase] + O2 = (17R,18S)-epoxy-(5Z,8Z,11Z,14Z)-eicosatetraenoate + oxidized [NADPH--hemoprotein reductase] + H2O + H(+). The catalysed reaction is (4Z,7Z,10Z,13Z,16Z,19Z)-docosahexaenoate + reduced [NADPH--hemoprotein reductase] + O2 = (19R,20S)-epoxy-(4Z,7Z,10Z,13Z,16Z)-docosapentaenoate + oxidized [NADPH--hemoprotein reductase] + H2O + H(+). It carries out the reaction (5S)-hydroperoxy-(6E,8Z,11Z,14Z)-eicosatetraenoate = 5-oxo-(6E,8Z,11Z,14Z)-eicosatetraenoate + H2O. The enzyme catalyses (12S)-hydroperoxy-(5Z,8Z,10E,14Z)-eicosatetraenoate = 12-oxo-(5Z,8Z,10E,14Z)-eicosatetraenoate + H2O. It catalyses the reaction (15S)-hydroperoxy-(5Z,8Z,11Z,13E)-eicosatetraenoate = 15-oxo-(5Z,8Z,11Z,13E)-eicosatetraenoate + H2O. The catalysed reaction is (13S)-hydroperoxy-(9Z,11E)-octadecadienoate = 13-oxo-(9Z,11E)-octadecadienoate + H2O. It carries out the reaction (5Z,8Z,11Z,14Z)-eicosatetraenoate + reduced [NADPH--hemoprotein reductase] + O2 = 13-hydroxy-(5Z,8Z,11Z,14Z)-eicosatetraenoate + oxidized [NADPH--hemoprotein reductase] + H2O + H(+). The enzyme catalyses (5Z,8Z,11Z,14Z)-eicosatetraenoate + reduced [NADPH--hemoprotein reductase] + O2 = 19-hydroxy-(5Z,8Z,11Z,14Z)-eicosatetraenoate + oxidized [NADPH--hemoprotein reductase] + H2O + H(+). It catalyses the reaction (9Z,12Z)-octadecadienoate + reduced [NADPH--hemoprotein reductase] + O2 = 11-hydroxy-(9Z,12Z)-octadecadienoate + oxidized [NADPH--hemoprotein reductase] + H2O + H(+). It functions in the pathway cofactor metabolism; retinol metabolism. It participates in steroid metabolism; cholesterol metabolism. Its pathway is lipid metabolism; arachidonate metabolism. In terms of biological role, a cytochrome P450 monooxygenase involved in the metabolism of various endogenous substrates, including fatty acids, steroid hormones and vitamins. Mechanistically, uses molecular oxygen inserting one oxygen atom into a substrate, and reducing the second into a water molecule, with two electrons provided by NADPH via cytochrome P450 reductase (NADPH--hemoprotein reductase). Catalyzes the hydroxylation of carbon-hydrogen bonds. Exhibits high catalytic activity for the formation of hydroxyestrogens from estrone (E1) and 17beta-estradiol (E2), namely 2-hydroxy E1 and E2. Metabolizes cholesterol toward 25-hydroxycholesterol, a physiological regulator of cellular cholesterol homeostasis. May act as a major enzyme for all-trans retinoic acid biosynthesis in the liver. Catalyzes two successive oxidative transformation of all-trans retinol to all-trans retinal and then to the active form all-trans retinoic acid. Primarily catalyzes stereoselective epoxidation of the last double bond of polyunsaturated fatty acids (PUFA), displaying a strong preference for the (R,S) stereoisomer. Catalyzes bisallylic hydroxylation and omega-1 hydroxylation of PUFA. May also participate in eicosanoids metabolism by converting hydroperoxide species into oxo metabolites (lipoxygenase-like reaction, NADPH-independent). Plays a role in the oxidative metabolism of xenobiotics. Catalyzes the N-hydroxylation of heterocyclic amines and the O-deethylation of phenacetin. Metabolizes caffeine via N3-demethylation. This chain is Cytochrome P450 1A2 (CYP1A2), found in Balaenoptera acutorostrata (Common minke whale).